The chain runs to 280 residues: Putative pyruvate, phosphate dikinase regulatory protein (280 aa).

149–156 serves as a coordination point for ADP; it reads GVSRSSKT.

It belongs to the pyruvate, phosphate/water dikinase regulatory protein family. PDRP subfamily.

The catalysed reaction is N(tele)-phospho-L-histidyl/L-threonyl-[pyruvate, phosphate dikinase] + ADP = N(tele)-phospho-L-histidyl/O-phospho-L-threonyl-[pyruvate, phosphate dikinase] + AMP + H(+). It carries out the reaction N(tele)-phospho-L-histidyl/O-phospho-L-threonyl-[pyruvate, phosphate dikinase] + phosphate + H(+) = N(tele)-phospho-L-histidyl/L-threonyl-[pyruvate, phosphate dikinase] + diphosphate. In terms of biological role, bifunctional serine/threonine kinase and phosphorylase involved in the regulation of the pyruvate, phosphate dikinase (PPDK) by catalyzing its phosphorylation/dephosphorylation. In Novosphingobium aromaticivorans (strain ATCC 700278 / DSM 12444 / CCUG 56034 / CIP 105152 / NBRC 16084 / F199), this protein is Putative pyruvate, phosphate dikinase regulatory protein.